The sequence spans 718 residues: Polyribonucleotide nucleotidyltransferase (718 aa).

Mg(2+)-binding residues include Asp-496 and Asp-502. The 60-residue stretch at 563–622 (PRLLTIKIDSDMIGLVIGPGGKTIKGITEETGAKIDIEDDGTVTISAVDENKAKRARNII) folds into the KH domain. An S1 motif domain is found at 632 to 700 (GDVYAGRITR…NKGRINLTRL (69 aa)).

Belongs to the polyribonucleotide nucleotidyltransferase family. Mg(2+) serves as cofactor.

The protein localises to the cytoplasm. It carries out the reaction RNA(n+1) + phosphate = RNA(n) + a ribonucleoside 5'-diphosphate. Functionally, involved in mRNA degradation. Catalyzes the phosphorolysis of single-stranded polyribonucleotides processively in the 3'- to 5'-direction. The polypeptide is Polyribonucleotide nucleotidyltransferase (Nostoc punctiforme (strain ATCC 29133 / PCC 73102)).